The following is a 393-amino-acid chain: 4-hydroxyphenylpyruvate dioxygenase (393 aa).

N-acetylthreonine is present on Thr2. 2 consecutive VOC domains span residues His18–Lys149 and Ile180–Lys338. At Lys132 the chain carries N6-succinyllysine. His183 lines the Fe cation pocket. Phosphoserine occurs at positions 211, 226, and 250. Fe cation-binding residues include His266 and Glu349.

It belongs to the 4HPPD family. Homodimer. Requires Fe cation as cofactor.

It is found in the cytoplasm. The protein resides in the endoplasmic reticulum membrane. It localises to the golgi apparatus membrane. The catalysed reaction is 3-(4-hydroxyphenyl)pyruvate + O2 = homogentisate + CO2. It functions in the pathway amino-acid degradation; L-phenylalanine degradation; acetoacetate and fumarate from L-phenylalanine: step 3/6. Functionally, catalyzes the conversion of 4-hydroxyphenylpyruvic acid to homogentisic acid, one of the steps in tyrosine catabolism. This chain is 4-hydroxyphenylpyruvate dioxygenase (HPD), found in Bos taurus (Bovine).